A 591-amino-acid chain; its full sequence is V-type ATP synthase alpha chain (591 aa).

233–240 contributes to the ATP binding site; that stretch reads GPFGAGKT.

It belongs to the ATPase alpha/beta chains family.

It catalyses the reaction ATP + H2O + 4 H(+)(in) = ADP + phosphate + 5 H(+)(out). Produces ATP from ADP in the presence of a proton gradient across the membrane. The V-type alpha chain is a catalytic subunit. The polypeptide is V-type ATP synthase alpha chain (Streptococcus pyogenes serotype M5 (strain Manfredo)).